Consider the following 404-residue polypeptide: 1-deoxy-D-xylulose 5-phosphate reductoisomerase (404 aa).

NADPH is bound by residues Thr5, Gly6, Ser7, Ile8, Gly31, Arg32, Asn33, and Asn121. Lys122 is a binding site for 1-deoxy-D-xylulose 5-phosphate. Residue Glu123 participates in NADPH binding. Asp147 is a Mn(2+) binding site. The 1-deoxy-D-xylulose 5-phosphate site is built by Ser148, Glu149, Ser185, and His208. Glu149 serves as a coordination point for Mn(2+). Gly214 contacts NADPH. 1-deoxy-D-xylulose 5-phosphate is bound by residues Ser221, Asn226, Lys227, and Glu230. Residue Glu230 coordinates Mn(2+).

It belongs to the DXR family. Requires Mg(2+) as cofactor. Mn(2+) is required as a cofactor.

The enzyme catalyses 2-C-methyl-D-erythritol 4-phosphate + NADP(+) = 1-deoxy-D-xylulose 5-phosphate + NADPH + H(+). It functions in the pathway isoprenoid biosynthesis; isopentenyl diphosphate biosynthesis via DXP pathway; isopentenyl diphosphate from 1-deoxy-D-xylulose 5-phosphate: step 1/6. In terms of biological role, catalyzes the NADPH-dependent rearrangement and reduction of 1-deoxy-D-xylulose-5-phosphate (DXP) to 2-C-methyl-D-erythritol 4-phosphate (MEP). The polypeptide is 1-deoxy-D-xylulose 5-phosphate reductoisomerase (Prochlorococcus marinus subsp. pastoris (strain CCMP1986 / NIES-2087 / MED4)).